The chain runs to 481 residues: MNEVSVIKEGWLHKRGEYIKTWRPRYFLLKSDGSFIGYKERPEAPDQTLPPLNNFSVAECQLMKTERPRPNTFVIRCLQWTTVIERTFHVDSPDEREEWMRAIQMVANSLKQRAPGEDPMDYKCGSPSDSSTTEEMEVAVSKARAKVTMNDFDYLKLLGKGTFGKVILVREKATGRYYAMKILRKEVIIAKDEVAHTVTESRVLQNTRHPFLTALKYAFQTHDRLCFVMEYANGGELFFHLSRERVFTEERARFYGAEIVSALEYLHSRDVVYRDIKLENLMLDKDGHIKITDFGLCKEGISDGATMKTFCGTPEYLAPEVLEDNDYGRAVDWWGLGVVMYEMMCGRLPFYNQDHERLFELILMEEIRFPRTLSPEAKSLLAGLLKKDPKQRLGGGPSDAKEVMEHRFFLSINWQDVVQKKLLPPFKPQVTSEVDTRYFDDEFTAQSITITPPDRYDSLGLLELDQRTHFPQFSYSASIRE.

Methionine 1 bears the N-acetylmethionine mark. Residues 5–108 form the PH domain; it reads SVIKEGWLHK…WMRAIQMVAN (104 aa). Phosphoserine is present on serine 34. Cysteine 60 and cysteine 77 are joined by a disulfide. At serine 126 the chain carries Phosphoserine. 2 O-linked (GlcNAc) serine glycosylation sites follow: serine 128 and serine 131. Residues 152–409 form the Protein kinase domain; it reads FDYLKLLGKG…AKEVMEHRFF (258 aa). Residues 158 to 166 and lysine 181 each bind ATP; that span reads LGKGTFGKV. Aspartate 275 functions as the Proton acceptor in the catalytic mechanism. 2 residues coordinate Mn(2+): asparagine 280 and aspartate 293. A disulfide bond links cysteine 297 and cysteine 311. O-linked (GlcNAc) threonine glycosylation occurs at threonine 306. Threonine 309 carries the post-translational modification Phosphothreonine; by PDPK1. The O-linked (GlcNAc) threonine glycan is linked to threonine 313. The AGC-kinase C-terminal domain maps to 410-481; it reads LSINWQDVVQ…QFSYSASIRE (72 aa). Phosphoserine is present on serine 447. A Phosphothreonine modification is found at threonine 451. Residues serine 474 and serine 478 each carry the phosphoserine modification. Serine 474 carries O-linked (GlcNAc) serine; alternate glycosylation.

The protein belongs to the protein kinase superfamily. AGC Ser/Thr protein kinase family. RAC subfamily. In terms of assembly, interacts with BTBD10. Interacts with KCTD20. Interacts (via PH domain) with MTCP1, TCL1A and TCL1B; this interaction may facilitate AKT2 oligomerization and phosphorylation, hence increasing kinase activity. Interacts with PHB2; this interaction may be important for myogenic differentiation. Interacts (when phosphorylated) with CLIP3/ClipR-59; this interaction promotes AKT2 recruitment to the plasma membrane. Interacts with WDFY2/ProF (via WD repeats 1-3). Phosphorylation on Thr-309 and Ser-474 is required for full activity. Phosphorylation of the activation loop at Thr-309 by PDPK1/PDK1 is a prerequisite for full activation. Phosphorylated and activated by PDPK1/PDK1 in the presence of phosphatidylinositol 3,4,5-trisphosphate. Phosphorylation by mTORC2 in response to growth factors plays a key role in AKT1 activation: mTORC2 phosphorylates different sites depending on the context, such as Ser-474 or Ser-478, thereby facilitating subsequent phosphorylation of the activation loop by PDPK1/PDK1. Post-translationally, ubiquitinated; undergoes both 'Lys-48'- and 'Lys-63'-linked polyubiquitination. TRAF6 catalyzes 'Lys-63'-linked AKT2 ubiquitination; this modification may be important for AKT2 recruitment to the plasma membrane and for AKT2 activating phosphorylation. When phosphorylated, undergoes 'Lys-48'-polyubiquitination catalyzed by TTC3 in the nucleus, leading to its degradation by the proteasome. In terms of processing, O-GlcNAcylation at Thr-306 and Thr-313 inhibits activating phosphorylation at Thr-309 via the disruption of the interaction between AKT and PDPK1/PDK1. Widely expressed. Expressed in myoblasts.

It is found in the cytoplasm. Its subcellular location is the nucleus. The protein localises to the cell membrane. It localises to the early endosome. It catalyses the reaction L-seryl-[protein] + ATP = O-phospho-L-seryl-[protein] + ADP + H(+). The enzyme catalyses L-threonyl-[protein] + ATP = O-phospho-L-threonyl-[protein] + ADP + H(+). With respect to regulation, phosphorylation at Thr-309 (in the kinase domain) and Ser-474 (in the C-terminal regulatory region) is required for full activation. In adipocytes and hepatocytes, the activation is induced by insulin. Aminofurazans, such as 4-[2-(4-amino-2,5-dihydro-1,2,5-oxadiazol-3-yl)-6-{[(1S)-3-amino-1-phenylpropyl]oxy}-1-ethyl-1H-imidazo[4,5-c]pyridin-4-yl]-2-methylbut-3-yn-2-ol (compound 32), are potent AKT2 inhibitors. AKT2 phosphorylation of PKP1 is induced by insulin. In terms of biological role, serine/threonine kinase closely related to AKT1 and AKT3. All 3 enzymes, AKT1, AKT2 and AKT3, are collectively known as AKT kinase. AKT regulates many processes including metabolism, proliferation, cell survival, growth and angiogenesis, through the phosphorylation of a range of downstream substrates. Over 100 substrates have been reported so far, although for most of them, the precise AKT kinase catalyzing the reaction was not specified. AKT regulates glucose uptake by mediating insulin-induced translocation of the SLC2A4/GLUT4 glucose transporter to the cell surface. Phosphorylation of PTPN1 at 'Ser-50' negatively modulates its phosphatase activity preventing dephosphorylation of the insulin receptor and the attenuation of insulin signaling. Phosphorylation of TBC1D4 triggers the binding of this effector to inhibitory 14-3-3 proteins, which is required for insulin-stimulated glucose transport. AKT also regulates the storage of glucose in the form of glycogen by phosphorylating GSK3A at 'Ser-21' and GSK3B at 'Ser-9', resulting in inhibition of its kinase activity. Phosphorylation of GSK3 isoforms by AKT is also thought to be one mechanism by which cell proliferation is driven. AKT also regulates cell survival via the phosphorylation of MAP3K5 (apoptosis signal-related kinase). Phosphorylation of 'Ser-83' decreases MAP3K5 kinase activity stimulated by oxidative stress and thereby prevents apoptosis. AKT mediates insulin-stimulated protein synthesis by phosphorylating TSC2 at 'Ser-939' and 'Thr-1462', thereby activating mTORC1 signaling and leading to both phosphorylation of 4E-BP1 and in activation of RPS6KB1. AKT is involved in the phosphorylation of members of the FOXO factors (Forkhead family of transcription factors), leading to binding of 14-3-3 proteins and cytoplasmic localization. In particular, FOXO1 is phosphorylated at 'Thr-24', 'Ser-256' and 'Ser-319'. FOXO3 and FOXO4 are phosphorylated on equivalent sites. AKT has an important role in the regulation of NF-kappa-B-dependent gene transcription and positively regulates the activity of CREB1 (cyclic AMP (cAMP)-response element binding protein). The phosphorylation of CREB1 induces the binding of accessory proteins that are necessary for the transcription of pro-survival genes such as BCL2 and MCL1. AKT phosphorylates 'Ser-454' on ATP citrate lyase (ACLY), thereby potentially regulating ACLY activity and fatty acid synthesis. Activates the 3B isoform of cyclic nucleotide phosphodiesterase (PDE3B) via phosphorylation of 'Ser-273', resulting in reduced cyclic AMP levels and inhibition of lipolysis. Phosphorylates PIKFYVE on 'Ser-318', which results in increased PI(3)P-5 activity. The Rho GTPase-activating protein DLC1 is another substrate and its phosphorylation is implicated in the regulation cell proliferation and cell growth. AKT plays a role as key modulator of the AKT-mTOR signaling pathway controlling the tempo of the process of newborn neurons integration during adult neurogenesis, including correct neuron positioning, dendritic development and synapse formation. Signals downstream of phosphatidylinositol 3-kinase (PI(3)K) to mediate the effects of various growth factors such as platelet-derived growth factor (PDGF), epidermal growth factor (EGF), insulin and insulin-like growth factor 1 (IGF1). AKT mediates the antiapoptotic effects of IGF1. Essential for the SPATA13-mediated regulation of cell migration and adhesion assembly and disassembly. May be involved in the regulation of the placental development. In response to lysophosphatidic acid stimulation, inhibits the ciliogenesis cascade. In this context, phosphorylates WDR44, hence stabilizing its interaction with Rab11 and preventing the formation of the ciliogenic Rab11-FIP3-RAB3IP complex. Also phosphorylates RAB3IP/Rabin8, thus may affect RAB3IP guanine nucleotide exchange factor (GEF) activity toward Rab8, which is important for cilia growth. Phosphorylates PKP1, facilitating its interaction with YWHAG and translocation to the nucleus, ultimately resulting in a reduction in keratinocyte intercellular adhesion. Phosphorylation of PKP1 increases PKP1 protein stability, translocation to the cytoplasm away from desmosome plaques and PKP1-driven cap-dependent translation. Several AKT2-specific substrates have been identified, including ANKRD2, C2CD5, CLK2 and PITX2. May play a role in myoblast differentiation. In this context, may act through PITX2 phosphorylation. Unphosphorylated PITX2 associates with an ELAVL1/HuR-containing complex, which stabilizes CCND1 cyclin mRNA, ensuring cell proliferation. Phosphorylation by AKT2 impairs this association, leading to CCND1 mRNA destabilization and progression towards differentiation. Also involved in the negative regulation of myogenesis in response to stress conditions. In this context, acts by phosphorylating ANKRD2. May also be a key regulator of glucose uptake. Regulates insulin-stimulated glucose transport by the increase of glucose transporter GLUT4 translocation from intracellular stores to the plasma membrane. In this context, acts by phosphorylating C2CD5/CDP138 on 'Ser-197' in insulin-stimulated adipocytes. Through the phosphorylation of CLK2 on 'Thr-343', involved in insulin-regulated suppression of hepatic gluconeogenesis. In Homo sapiens (Human), this protein is RAC-beta serine/threonine-protein kinase.